Here is a 438-residue protein sequence, read N- to C-terminus: Proline--tRNA ligase (438 aa).

Belongs to the class-II aminoacyl-tRNA synthetase family. ProS type 2 subfamily. Homodimer.

Its subcellular location is the cytoplasm. The enzyme catalyses tRNA(Pro) + L-proline + ATP = L-prolyl-tRNA(Pro) + AMP + diphosphate. Its function is as follows. Catalyzes the attachment of proline to tRNA(Pro) in a two-step reaction: proline is first activated by ATP to form Pro-AMP and then transferred to the acceptor end of tRNA(Pro). This is Proline--tRNA ligase from Gluconobacter oxydans (strain 621H) (Gluconobacter suboxydans).